The sequence spans 317 residues: Protein-methionine-sulfoxide reductase catalytic subunit MsrP (317 aa).

The tat-type signal signal peptide spans 1 to 40 (MNKFTKTDVTPEKLFIQRRKIIQGMSVLSAAAAFPNLAAA). Residues asparagine 72, 75–76 (YE), cysteine 129, threonine 164, asparagine 216, arginine 221, and 232–234 (SIK) each bind Mo-molybdopterin.

The protein belongs to the MsrP family. As to quaternary structure, heterodimer of a catalytic subunit (MsrP) and a heme-binding subunit (MsrQ). Mo-molybdopterin is required as a cofactor. Predicted to be exported by the Tat system. The position of the signal peptide cleavage has not been experimentally proven.

The protein localises to the periplasm. The enzyme catalyses L-methionyl-[protein] + a quinone + H2O = L-methionyl-(S)-S-oxide-[protein] + a quinol. It carries out the reaction L-methionyl-[protein] + a quinone + H2O = L-methionyl-(R)-S-oxide-[protein] + a quinol. Functionally, part of the MsrPQ system that repairs oxidized periplasmic proteins containing methionine sulfoxide residues (Met-O), using respiratory chain electrons. Thus protects these proteins from oxidative-stress damage caused by reactive species of oxygen and chlorine generated by the host defense mechanisms. MsrPQ is essential for the maintenance of envelope integrity under bleach stress, rescuing a wide series of structurally unrelated periplasmic proteins from methionine oxidation. The catalytic subunit MsrP is non-stereospecific, being able to reduce both (R-) and (S-) diastereoisomers of methionine sulfoxide. This chain is Protein-methionine-sulfoxide reductase catalytic subunit MsrP, found in Actinobacillus succinogenes (strain ATCC 55618 / DSM 22257 / CCUG 43843 / 130Z).